Reading from the N-terminus, the 256-residue chain is Sorbitol dehydrogenase (256 aa).

NAD(+)-binding positions include 15–17, D36, 59–60, N86, Y152, K156, and 182–187; these read RGI, DV, and PGVVDG. Residue Y152 is the Proton acceptor of the active site.

This sequence belongs to the short-chain dehydrogenases/reductases (SDR) family. As to quaternary structure, homodimer. May function as a tetramer in vivo.

The catalysed reaction is keto-D-fructose + NADH + H(+) = D-sorbitol + NAD(+). It catalyses the reaction galactitol + NAD(+) = keto-D-tagatose + NADH + H(+). The enzyme catalyses L-iditol + NAD(+) = keto-L-sorbose + NADH + H(+). With respect to regulation, inhibited by DTT, N-bromosuccinimide and iodoacetic acid. Functionally, catalyzes the oxidation of D-sorbitol (D-glucitol) to D-fructose. Can also catalyze the oxidation of galactitol to D-tagatose and the oxidation of L-iditol, with lower efficiency. The protein is Sorbitol dehydrogenase (polS) of Cereibacter sphaeroides (Rhodobacter sphaeroides).